The chain runs to 99 residues: Defensin-like protein 2 (99 aa).

The first 30 residues, Met1 to Gln30, serve as a signal peptide directing secretion. Disulfide bonds link Cys34/Cys86, Cys47/Cys71, Cys56/Cys81, and Cys60/Cys83. A propeptide spanning residues Ile94–Ile99 is cleaved from the precursor.

This sequence belongs to the DEFL family. Protease inhibitor I18 (RTI/MTI-2) subfamily.

It is found in the secreted. Its function is as follows. Inhibits bovine beta-trypsin and alpha-chymotrypsin on a 1:1 molar basis. The protein is Defensin-like protein 2 of Sinapis alba (White mustard).